A 162-amino-acid chain; its full sequence is NADPH-dependent 7-cyano-7-deazaguanine reductase (162 aa).

Catalysis depends on C53, which acts as the Thioimide intermediate. D60 acts as the Proton donor in catalysis. Residues 75 to 77 and 94 to 95 contribute to the substrate site; these read VES and HE.

The protein belongs to the GTP cyclohydrolase I family. QueF type 1 subfamily.

It is found in the cytoplasm. The enzyme catalyses 7-aminomethyl-7-carbaguanine + 2 NADP(+) = 7-cyano-7-deazaguanine + 2 NADPH + 3 H(+). The protein operates within tRNA modification; tRNA-queuosine biosynthesis. In terms of biological role, catalyzes the NADPH-dependent reduction of 7-cyano-7-deazaguanine (preQ0) to 7-aminomethyl-7-deazaguanine (preQ1). The protein is NADPH-dependent 7-cyano-7-deazaguanine reductase of Streptococcus mutans serotype c (strain ATCC 700610 / UA159).